The primary structure comprises 195 residues: dITP/XTP pyrophosphatase (195 aa).

8–13 (TNNQGK) contributes to the substrate binding site. Positions 39 and 68 each coordinate Mg(2+). D68 functions as the Proton acceptor in the catalytic mechanism. Residues S69, 149 to 152 (FGYD), K172, and 177 to 178 (HR) each bind substrate.

The protein belongs to the HAM1 NTPase family. As to quaternary structure, homodimer. The cofactor is Mg(2+).

The catalysed reaction is XTP + H2O = XMP + diphosphate + H(+). It catalyses the reaction dITP + H2O = dIMP + diphosphate + H(+). The enzyme catalyses ITP + H2O = IMP + diphosphate + H(+). Pyrophosphatase that catalyzes the hydrolysis of nucleoside triphosphates to their monophosphate derivatives, with a high preference for the non-canonical purine nucleotides XTP (xanthosine triphosphate), dITP (deoxyinosine triphosphate) and ITP. Seems to function as a house-cleaning enzyme that removes non-canonical purine nucleotides from the nucleotide pool, thus preventing their incorporation into DNA/RNA and avoiding chromosomal lesions. The sequence is that of dITP/XTP pyrophosphatase from Staphylococcus epidermidis (strain ATCC 35984 / DSM 28319 / BCRC 17069 / CCUG 31568 / BM 3577 / RP62A).